The primary structure comprises 1068 residues: MPKRTDINTILIIGAGPIVIGQACEFDYSGAQACKALREEGYKVVLVNSNPATIMTDPDMADVTYIEPIEWRTVEKIIEKERPDAILPTMGGQTALNCALDLSKNGVLKKYNVELIGAKEDAIDKAEDRGRFKEAMEKIGLSTPKSFVCHTLEEAWAAQSEVGFPTLIRPSFTMGGSGGGIAYNKDEFYAICERGFDASPTHELLIEQSVLGWKEYEMEVVRDKADNCIIVCSIENFDPMGVHTGDSITVAPAQTLTDKEYQIMRNASIAVLREIGVDTGGSNVQFAINPENGEMIVIEMNPRVSRSSALASKATGFPIAKVAAKLAVGYTLNELRNDITGGLIPASFEPSIDYVVTKVPRFAFEKFPQADDRLTTQMKSVGEVMAMGRTFQESLQKALRGLETGICGFNLMSEEPEKIRQELGNPGPIRILYVADAFGAGFTLDEVHHYSKIDPWFLIQIQDLVLEELALEKRTLDDLDYAELRRLKRKGFSDKRIAQLTKSAESAVRNKRVSLNLHPVYKRVDTCAGEFTSDTAYLYSTYEEECESRPSDKKKIMILGGGPNRIGQGIEFDYCCVHASLALREAGFETIMVNCNPETVSTDFDTSDRLYFEPLTLEDVLEIIHVEKPHGVIVHYGGQTPLKLANDLHANGVNIIGTSADSIDAAEDRERFQQILHKLHLKQPTNRTARNAEEAVKLAEEVGYPLVVRPSYVLGGRAMQIVYNVDELQRYMREAVSVSNDSPILLDHFLNNAIEVDVDCICDGAEVVIGGIMQHIEQAGIHSGDSACSLPPYSLSQEVQDEIRRQTAEMAFALGVKGLMNVQFAVQDGVIYVLEVNPRASRTVPFVSKATGRPLAKIAARVMAGESLKAQGIQGEVIPPFYSVKEAVFPFIKFPGVDTVLGPEMRSTGEVMGVGTTFAEAFLKAQLGANERIPKTGKVFLSVNDADKPRLLPIARQLQESGYGLCATLGTAKFLREHGVAVQIINKVREGRPNIVDAIKNGEIAMVINTVSGLAETVTDGHAIRRSALQQKVFLQTTLAGAEALAGSVEYLADSEVYSLQDLHQRLL.

The segment at 1-403 is carboxyphosphate synthetic domain; sequence MPKRTDINTI…SLQKALRGLE (403 aa). ATP-binding residues include arginine 129, arginine 169, glycine 175, glycine 176, glutamine 208, valine 210, glutamate 215, glycine 241, valine 242, histidine 243, glutamine 285, and glutamate 299. An ATP-grasp 1 domain is found at 133–328; sequence KEAMEKIGLS…IAKVAAKLAV (196 aa). Mg(2+) is bound by residues glutamine 285, glutamate 299, and asparagine 301. Residues glutamine 285, glutamate 299, and asparagine 301 each contribute to the Mn(2+) site. The tract at residues 404-548 is oligomerization domain; it reads TGICGFNLMS…YSTYEEECES (145 aa). The segment at 549-930 is carbamoyl phosphate synthetic domain; that stretch reads RPSDKKKIMI…AFLKAQLGAN (382 aa). An ATP-grasp 2 domain is found at 673–864; that stretch reads QQILHKLHLK…LAKIAARVMA (192 aa). ATP is bound by residues arginine 709, histidine 748, leucine 750, glutamate 755, glycine 780, isoleucine 781, histidine 782, serine 783, glutamine 823, and glutamate 835. Mg(2+) is bound by residues glutamine 823, glutamate 835, and asparagine 837. Mn(2+) is bound by residues glutamine 823, glutamate 835, and asparagine 837. The region spanning 931–1068 is the MGS-like domain; sequence ERIPKTGKVF…SLQDLHQRLL (138 aa). Residues 931–1068 are allosteric domain; sequence ERIPKTGKVF…SLQDLHQRLL (138 aa).

This sequence belongs to the CarB family. Composed of two chains; the small (or glutamine) chain promotes the hydrolysis of glutamine to ammonia, which is used by the large (or ammonia) chain to synthesize carbamoyl phosphate. Tetramer of heterodimers (alpha,beta)4. The cofactor is Mg(2+). Mn(2+) is required as a cofactor.

It carries out the reaction hydrogencarbonate + L-glutamine + 2 ATP + H2O = carbamoyl phosphate + L-glutamate + 2 ADP + phosphate + 2 H(+). The catalysed reaction is hydrogencarbonate + NH4(+) + 2 ATP = carbamoyl phosphate + 2 ADP + phosphate + 2 H(+). The protein operates within amino-acid biosynthesis; L-arginine biosynthesis; carbamoyl phosphate from bicarbonate: step 1/1. It participates in pyrimidine metabolism; UMP biosynthesis via de novo pathway; (S)-dihydroorotate from bicarbonate: step 1/3. In terms of biological role, large subunit of the glutamine-dependent carbamoyl phosphate synthetase (CPSase). CPSase catalyzes the formation of carbamoyl phosphate from the ammonia moiety of glutamine, carbonate, and phosphate donated by ATP, constituting the first step of 2 biosynthetic pathways, one leading to arginine and/or urea and the other to pyrimidine nucleotides. The large subunit (synthetase) binds the substrates ammonia (free or transferred from glutamine from the small subunit), hydrogencarbonate and ATP and carries out an ATP-coupled ligase reaction, activating hydrogencarbonate by forming carboxy phosphate which reacts with ammonia to form carbamoyl phosphate. The polypeptide is Carbamoyl phosphate synthase large chain (Pasteurella multocida (strain Pm70)).